Reading from the N-terminus, the 226-residue chain is X-linked lymphocyte-regulated protein 3C (226 aa).

The interval methionine 1–valine 66 is disordered. The span at alanine 8–methionine 18 shows a compositional bias: basic and acidic residues. The span at asparagine 21–proline 30 shows a compositional bias: polar residues. 2 stretches are compositionally biased toward basic and acidic residues: residues glutamate 39–isoleucine 48 and glutamine 56–valine 66. Positions glutamate 155–glutamine 210 form a coiled coil.

The protein belongs to the XLR/SYCP3 family. In terms of tissue distribution, expressed in lymphoid cells.

The chain is X-linked lymphocyte-regulated protein 3C (Xlr3c) from Mus musculus (Mouse).